The sequence spans 119 residues: Large ribosomal subunit protein uL22c (119 aa).

This sequence belongs to the universal ribosomal protein uL22 family. In terms of assembly, part of the 50S ribosomal subunit.

Its subcellular location is the plastid. It localises to the chloroplast. Its function is as follows. This protein binds specifically to 23S rRNA. In terms of biological role, the globular domain of the protein is located near the polypeptide exit tunnel on the outside of the subunit, while an extended beta-hairpin is found that lines the wall of the exit tunnel in the center of the 70S ribosome. The sequence is that of Large ribosomal subunit protein uL22c (rpl22) from Chlorokybus atmophyticus (Soil alga).